The chain runs to 1167 residues: RNA-directed RNA polymerase (1167 aa).

A RdRp catalytic domain is found at 553 to 735; the sequence is LTYGILAEAT…KALASYTGLE (183 aa).

This sequence belongs to the reoviridae RNA-directed RNA polymerase family. Interacts with VP3 (Potential). Interacts with VP2 (Potential). Interacts with NSP5; this interaction is probably necessary for the formation of functional virus factories.

It localises to the virion. It carries out the reaction RNA(n) + a ribonucleoside 5'-triphosphate = RNA(n+1) + diphosphate. In terms of biological role, RNA-directed RNA polymerase that is involved in both transcription and genome replication. Together with VP3 capping enzyme, forms an enzyme complex positioned near the channels situated at each of the five-fold vertices of the core. Following infection, the outermost layer of the virus is lost, leaving a double-layered particle (DLP) made up of the core and VP6 shell. VP1 then catalyzes the transcription of fully conservative plus-strand genomic RNAs that are extruded through the DLP's channels into the cytoplasm where they function as mRNAs for translation of viral proteins. One copy of each of the viral (+)RNAs is also recruited during core assembly, together with newly synthesized polymerase complexes and VP2. The polymerase of these novo-formed particles catalyzes the synthesis of complementary minus-strands leading to dsDNA formation. To do so, the polymerase specifically recognizes conserved 3' sequence(s) in plus-strand RNA templates. Once dsRNA synthesis is complete, the polymerase switches to the transcriptional mode, thus providing secondary transcription. This chain is RNA-directed RNA polymerase, found in Rotavirus X (strain RVX/Human/China/NADRV-J19/1997/GXP[X]) (RV ADRV-N).